The primary structure comprises 390 residues: Flap endonuclease 1 (390 aa).

The N-domain stretch occupies residues 1–111 (MGIKGLAKLL…GELLKRREKR (111 aa)). A Mg(2+)-binding site is contributed by aspartate 34. DNA-binding residues include arginine 47 and arginine 77. Mg(2+) contacts are provided by aspartate 93, glutamate 165, glutamate 167, aspartate 186, and aspartate 188. The tract at residues 129–260 (EQDKQSKRLV…KTALKLIREH (132 aa)) is I-domain. Glutamate 165 contributes to the DNA binding site. DNA-binding residues include glycine 238 and aspartate 240. Residue aspartate 240 participates in Mg(2+) binding. The segment at 342–390 (KPQSRMDSFFKVKANPEGDKKKAEKRKAELAASRGKGKKGKGGGGFKKK) is disordered. Positions 343 to 351 (PQSRMDSFF) are interaction with PCNA. Basic and acidic residues predominate over residues 349 to 370 (SFFKVKANPEGDKKKAEKRKAE). Basic residues predominate over residues 376 to 390 (GKGKKGKGGGGFKKK).

Belongs to the XPG/RAD2 endonuclease family. FEN1 subfamily. In terms of assembly, interacts with PCNA. Three molecules of FEN1 bind to one PCNA trimer with each molecule binding to one PCNA monomer. PCNA stimulates the nuclease activity without altering cleavage specificity. The cofactor is Mg(2+). Phosphorylated. Phosphorylation upon DNA damage induces relocalization to the nuclear plasma.

Its subcellular location is the nucleus. It localises to the nucleolus. The protein localises to the nucleoplasm. The protein resides in the mitochondrion. Structure-specific nuclease with 5'-flap endonuclease and 5'-3' exonuclease activities involved in DNA replication and repair. During DNA replication, cleaves the 5'-overhanging flap structure that is generated by displacement synthesis when DNA polymerase encounters the 5'-end of a downstream Okazaki fragment. It enters the flap from the 5'-end and then tracks to cleave the flap base, leaving a nick for ligation. Also involved in the long patch base excision repair (LP-BER) pathway, by cleaving within the apurinic/apyrimidinic (AP) site-terminated flap. Acts as a genome stabilization factor that prevents flaps from equilibrating into structures that lead to duplications and deletions. Also possesses 5'-3' exonuclease activity on nicked or gapped double-stranded DNA, and exhibits RNase H activity. Also involved in replication and repair of rDNA and in repairing mitochondrial DNA. This chain is Flap endonuclease 1, found in Thalassiosira pseudonana (Marine diatom).